The following is a 1271-amino-acid chain: Diacylglycerol kinase kappa (1271 aa).

Positions 1-15 (MDRGAAAAQGTAPPQ) are enriched in low complexity. Positions 1–160 (MDRGAAAAQG…PEPTPEPVTE (160 aa)) are disordered. Positions 23–44 (SPEPPPPWPPPPPPPAPPPAPP) are enriched in pro residues. A run of 33 repeats spans residues 48-51 (EASP), 52-55 (EPIP), 56-59 (EPCP), 60-63 (ELAP), 64-67 (GPCP), 68-71 (EATS), 72-75 (ESAT), 76-79 (ELYT), 80-83 (EPTP), 84-87 (EPAT), 88-91 (EPAS), 92-95 (EPAP), 96-99 (EPAT), 100-103 (EPAP), 104-107 (EPAT), 108-111 (EPAP), 112-115 (EPAP), 116-119 (EPAT), 120-123 (ESAP), 124-127 (EPTP), 128-131 (EPAL), 132-135 (ESVP), 136-139 (EPAP), 140-143 (ELTP), 144-147 (EVAP), 148-151 (ELAP), 152-155 (EPTP), 156-159 (EPVT), 160-163 (ELAP), 164-167 (EFCP), 168-171 (EAAP), 172-175 (EFRP), and 176-179 (SPAP). Residues 48–179 (EASPEPIPEP…APEFRPSPAP (132 aa)) form a 33 X 4 AA approximate tandem repeats of E-P-A-P region. Over residues 52–66 (EPIPEPCPELAPGPC) the composition is skewed to pro residues. The residue at position 78 (Tyr78) is a Phosphotyrosine. The segment covering 82 to 116 (TPEPATEPASEPAPEPATEPAPEPATEPAPEPAPE) has biased composition (pro residues). The segment covering 139–149 (PELTPEVAPEL) has biased composition (low complexity). Positions 190 to 209 (ERGLKTSPSPSPSPSPRTPM) are disordered. The PH domain occupies 216–309 (KILKEGPMLK…WINIIKTIQQ (94 aa)). Phorbol-ester/DAG-type zinc fingers lie at residues 327–377 (MHCW…SKDC) and 398–449 (PHQW…SKEC). Positions 487–622 (ACSCPLLIFI…LDRWSVMIRE (136 aa)) constitute a DAGKc domain. Disordered stretches follow at residues 805-825 (DDPEDINQTSPRRRSRRGTLS) and 1252-1271 (RHREDEAEGDDPLTPSRSQL). Residues 1199 to 1268 (PIFVPEEKSS…EGDDPLTPSR (70 aa)) form a required for localization to the plasma membrane region.

This sequence belongs to the eukaryotic diacylglycerol kinase family. In terms of assembly, does not form homooligomers. In terms of processing, phosphorylated at Tyr-78 by some member of the SRC family in response to H(2)O(2). Expressed in testis, and to a lesser extent in placenta.

It localises to the cell membrane. The enzyme catalyses a 1,2-diacyl-sn-glycerol + ATP = a 1,2-diacyl-sn-glycero-3-phosphate + ADP + H(+). It carries out the reaction 1,2-di-(9Z-octadecenoyl)-sn-glycerol + ATP = 1,2-di-(9Z-octadecenoyl)-sn-glycero-3-phosphate + ADP + H(+). It functions in the pathway lipid metabolism; glycerolipid metabolism. Its activity is regulated as follows. Inhibited in response to H(2)O(2). In terms of biological role, diacylglycerol kinase that converts diacylglycerol/DAG into phosphatidic acid/phosphatidate/PA and regulates the respective levels of these two bioactive lipids. Thereby, acts as a central switch between the signaling pathways activated by these second messengers with different cellular targets and opposite effects in numerous biological processes. This chain is Diacylglycerol kinase kappa, found in Homo sapiens (Human).